The chain runs to 335 residues: Avermitilol synthase (335 aa).

The Mg(2+) site is built by aspartate 80, aspartate 84, asparagine 219, serine 223, and glutamate 227. The DDXXD motif signature appears at 80-84; it reads DDQFD.

It belongs to the terpene synthase family. Mg(2+) is required as a cofactor.

It catalyses the reaction (2E,6E)-farnesyl diphosphate + H2O = avermitilol + diphosphate. Its function is as follows. Catalyzes the cyclization of farnesyl diphosphate to avermitilol. This is Avermitilol synthase (tpc1) from Streptomyces avermitilis (strain ATCC 31267 / DSM 46492 / JCM 5070 / NBRC 14893 / NCIMB 12804 / NRRL 8165 / MA-4680).